We begin with the raw amino-acid sequence, 181 residues long: Deoxyuridine 5'-triphosphate nucleotidohydrolase (181 aa).

Substrate-binding positions include 96–98 (RSG), N109, 113–115 (TVD), and K123.

The protein belongs to the dUTPase family. Mg(2+) is required as a cofactor.

It carries out the reaction dUTP + H2O = dUMP + diphosphate + H(+). It participates in pyrimidine metabolism; dUMP biosynthesis; dUMP from dCTP (dUTP route): step 2/2. This enzyme is involved in nucleotide metabolism: it produces dUMP, the immediate precursor of thymidine nucleotides and it decreases the intracellular concentration of dUTP so that uracil cannot be incorporated into DNA. The protein is Deoxyuridine 5'-triphosphate nucleotidohydrolase of Corynebacterium efficiens (strain DSM 44549 / YS-314 / AJ 12310 / JCM 11189 / NBRC 100395).